The primary structure comprises 234 residues: Lipoprotein-releasing system ATP-binding protein LolD (234 aa).

An ABC transporter domain is found at 13–233 (IYLHEIKRQY…SLSDGQVVEL (221 aa)). An ATP-binding site is contributed by 49–56 (APSGSGKS).

The protein belongs to the ABC transporter superfamily. Lipoprotein translocase (TC 3.A.1.125) family. As to quaternary structure, the complex is composed of two ATP-binding proteins (LolD) and two transmembrane proteins (LolC and LolE).

It localises to the cell inner membrane. In terms of biological role, part of the ABC transporter complex LolCDE involved in the translocation of mature outer membrane-directed lipoproteins, from the inner membrane to the periplasmic chaperone, LolA. Responsible for the formation of the LolA-lipoprotein complex in an ATP-dependent manner. The polypeptide is Lipoprotein-releasing system ATP-binding protein LolD (Bradyrhizobium diazoefficiens (strain JCM 10833 / BCRC 13528 / IAM 13628 / NBRC 14792 / USDA 110)).